A 232-amino-acid chain; its full sequence is MRKVAKRIKDIRKDIDFNELYALKDAVSMVKERAVAKFDETIEISMNLGVDPRHADQMVRGVAHLPNGTGRNVRVAVFARGEKAEEAKASGADIVGAEDLFESINSGTIDFDRCIATPDMMLLVGRLGKILGPRNLMPNPKVGTVTLDVANAVKASKGGAVEFRVEKAGIVHAGIGKASFGVEKIVENIKAFASAVIKARPQGAKGEYIKRVAVSSTMGIGIKVDPATVCSE.

The protein belongs to the universal ribosomal protein uL1 family. Part of the 50S ribosomal subunit.

Functionally, binds directly to 23S rRNA. The L1 stalk is quite mobile in the ribosome, and is involved in E site tRNA release. Its function is as follows. Protein L1 is also a translational repressor protein, it controls the translation of the L11 operon by binding to its mRNA. The sequence is that of Large ribosomal subunit protein uL1 from Bartonella quintana (strain Toulouse) (Rochalimaea quintana).